A 560-amino-acid polypeptide reads, in one-letter code: Cytosolic purine 5'-nucleotidase (560 aa).

D52 functions as the Nucleophile in the catalytic mechanism. IMP is bound by residues D52 and D54. Mg(2+) is bound by residues D52 and D54. Residue D54 is the Proton donor of the active site. The ATP site is built by R144 and N154. R202, D206, K215, T249, N250, S251, and K292 together coordinate IMP. D351 lines the Mg(2+) pocket. Residue S418 is modified to Phosphoserine. The ATP site is built by Q453 and R456. Phosphoserine is present on residues S502, S511, and S527. The segment at P541 to E560 is disordered. The required for tetramer assembly stretch occupies residues H548–E560. Positions E550–E560 are enriched in acidic residues.

The protein belongs to the 5'(3')-deoxyribonucleotidase family. In terms of assembly, homotetramer. The cofactor is Mg(2+).

It localises to the cytoplasm. The protein resides in the cytosol. It catalyses the reaction a ribonucleoside 5'-phosphate + H2O = a ribonucleoside + phosphate. It carries out the reaction a 2'-deoxyribonucleoside + a ribonucleoside 5'-phosphate = a ribonucleoside + a 2'-deoxyribonucleoside 5'-phosphate. The enzyme catalyses IMP + H2O = inosine + phosphate. The catalysed reaction is GMP + H2O = guanosine + phosphate. It catalyses the reaction dIMP + H2O = 2'-deoxyinosine + phosphate. It carries out the reaction dGMP + H2O = 2'-deoxyguanosine + phosphate. The enzyme catalyses XMP + H2O = xanthosine + phosphate. The catalysed reaction is inosine + GMP = guanosine + IMP. It catalyses the reaction dGMP + inosine = 2'-deoxyguanosine + IMP. It carries out the reaction dIMP + inosine = 2'-deoxyinosine + IMP. The enzyme catalyses inosine + UMP = uridine + IMP. The catalysed reaction is inosine + CMP = cytidine + IMP. It catalyses the reaction inosine + AMP = IMP + adenosine. With respect to regulation, allosterically activated by various compounds including ATP, 2,3-BPG/2,3-Bisphosphoglyceric acid and Ap4A/P1,P4-bis(5'-adenosyl) tetraphosphate. Binding of an allosteric activator is a prerequisiste to magnesium and substrate binding. Inhibited by inorganic phosphate. In terms of biological role, broad specificity cytosolic 5'-nucleotidase that catalyzes the dephosphorylation of 6-hydroxypurine nucleoside 5'-monophosphates. In addition, possesses a phosphotransferase activity by which it can transfer a phosphate from a donor nucleoside monophosphate to an acceptor nucleoside, preferably inosine, deoxyinosine and guanosine. Has the highest activities for IMP and GMP followed by dIMP, dGMP and XMP. Could also catalyze the transfer of phosphates from pyrimidine monophosphates but with lower efficiency. Through these activities regulates the purine nucleoside/nucleotide pools within the cell. The chain is Cytosolic purine 5'-nucleotidase from Rattus norvegicus (Rat).